Reading from the N-terminus, the 127-residue chain is Single-stranded DNA-binding protein 2 (127 aa).

The region spanning 4-103 (INKVMLVGRC…ITINTIELLG (100 aa)) is the SSB domain. Residues 104 to 127 (SPRKEESTSTSAPNETQAVANANF) form a disordered region. Polar residues predominate over residues 111-127 (TSTSAPNETQAVANANF).

In terms of assembly, homotetramer.

The polypeptide is Single-stranded DNA-binding protein 2 (ssb2) (Nostoc sp. (strain PCC 7120 / SAG 25.82 / UTEX 2576)).